The primary structure comprises 473 residues: H(+)/Cl(-) exchange transporter ClcA (473 aa).

Residues Met1 to Pro32 lie on the Cytoplasmic side of the membrane. Residues Leu33 to Val69 traverse the membrane as a helical segment. Topologically, residues His70 to Pro76 are periplasmic. Residues Leu77–Tyr100 form a helical membrane-spanning segment. The short motif at Gly106–Pro110 is the Selectivity filter part_1 element. A chloride-binding site is contributed by Ser107. The segment at residues Ile109–Leu116 is an intramembrane region (helical). Over Glu117–Arg123 the chain is Cytoplasmic. The next 2 helical transmembrane spans lie at Trp124–Gly141 and Glu148–Phe166. Residues Gly146–Pro150 carry the Selectivity filter part_2 motif. Over Arg167 to Thr176 the chain is Cytoplasmic. 2 consecutive intramembrane regions (helical) follow at residues Leu177–Ala189 and Pro193–Ile201. Residues Glu202–Ser214 are Cytoplasmic-facing. Residues Ile215–Phe232 form a helical membrane-spanning segment. Over Asn233–Leu252 the chain is Periplasmic. The chain crosses the membrane as a helical span at residues Trp253 to His281. Residues Arg282 to Asn287 lie on the Cytoplasmic side of the membrane. A helical transmembrane segment spans residues Ile288 to Ala309. Residues Pro310–Ser329 lie on the Periplasmic side of the membrane. 2 helical membrane passes run Met330–Ser349 and Gly355–Val376. A Selectivity filter part_3 motif is present at residues Gly355–Pro359. The chloride site is built by Ile356 and Phe357. The Periplasmic portion of the chain corresponds to Glu377 to Ala386. The helical intramembrane region spans Gly387 to Ser401. An intramembrane region (note=Loop between two helices) is located at residues Ile402 to Ala404. Positions Pro405 to Thr416 form an intramembrane region, helical. The segment at residues Asp417–Leu421 is an intramembrane region (note=Loop between two helices). The helical transmembrane segment at Ile422–Phe438 threads the bilayer. Topologically, residues Thr439–Thr473 are cytoplasmic. Tyr445 provides a ligand contact to chloride.

This sequence belongs to the chloride channel (TC 2.A.49) family. ClcA subfamily. Homodimer.

The protein resides in the cell inner membrane. The enzyme catalyses 2 chloride(in) + H(+)(out) = 2 chloride(out) + H(+)(in). In terms of biological role, proton-coupled chloride transporter. Functions as antiport system and exchanges two chloride ions for 1 proton. Probably acts as an electrical shunt for an outwardly-directed proton pump that is linked to amino acid decarboxylation, as part of the extreme acid resistance (XAR) response. In Escherichia coli O157:H7, this protein is H(+)/Cl(-) exchange transporter ClcA.